A 425-amino-acid chain; its full sequence is Protein let-756 (425 aa).

2 disordered regions span residues 277–298 (LEEKKRRREKKKRRREDRLRKE) and 314–425 (EEEL…QRYP). Positions 281–291 (KRRREKKKRRR) are enriched in basic residues. Residues 329 to 340 (ASTQTRYNRPQN) are compositionally biased toward polar residues. The segment covering 378–389 (HNSHHHHHHHPR) has biased composition (basic residues). The span at 395–425 (DPQQRHQSQQHYLAQTVSNPNRQNVNYQRYP) shows a compositional bias: polar residues.

It belongs to the heparin-binding growth factors family. In terms of assembly, interacts with pal-1. As to expression, expressed in pharynx, CAN neuron and body wall muscles.

It localises to the nucleus. Its subcellular location is the membrane. Its function is as follows. Required for larval development. Probably by binding receptor egl-15, negatively regulates membrane protrusion from body wall muscles during larval development. This Caenorhabditis elegans protein is Protein let-756 (let-756).